Consider the following 350-residue polypeptide: Divinyl chlorophyll a/b light-harvesting protein PcbB (350 aa).

Transmembrane regions (helical) follow at residues phenylalanine 27 to leucine 47, isoleucine 89 to methionine 109, phenylalanine 141 to alanine 161, valine 202 to valine 222, leucine 244 to serine 264, and leucine 305 to leucine 325.

Belongs to the PsbB/PsbC family. IsiA/Pcb subfamily. In terms of assembly, the antenna complex consists of divinyl chlorophylls (a and b) and divinyl chlorophyll a/b binding proteins. Under iron-starvation forms a complex with PSI, consisting of a PSI trimer surrounded by a ring composed of 18 PcbB subunits. It depends on divinyl chlorophyll a as a cofactor. The cofactor is divinyl chlorophyll b.

The protein localises to the cellular thylakoid membrane. Functionally, the antenna complex functions as a light receptor, it captures and delivers excitation energy to photosystems I. The Prochlorales pcb genes are not related to higher plant LHCs. The chain is Divinyl chlorophyll a/b light-harvesting protein PcbB (pcbB) from Prochlorococcus marinus (strain MIT 9313).